Consider the following 374-residue polypeptide: PqqA peptide cyclase (374 aa).

The Radical SAM core domain maps to isoleucine 4–aspartate 224. Residues cysteine 18, cysteine 22, and cysteine 25 each coordinate [4Fe-4S] cluster.

The protein belongs to the radical SAM superfamily. PqqE family. In terms of assembly, interacts with PqqD. The interaction is necessary for activity of PqqE. [4Fe-4S] cluster is required as a cofactor.

The catalysed reaction is [PQQ precursor protein] + S-adenosyl-L-methionine = E-Y cross-linked-[PQQ precursor protein] + 5'-deoxyadenosine + L-methionine + H(+). It functions in the pathway cofactor biosynthesis; pyrroloquinoline quinone biosynthesis. Its function is as follows. Catalyzes the cross-linking of a glutamate residue and a tyrosine residue in the PqqA protein as part of the biosynthesis of pyrroloquinoline quinone (PQQ). The protein is PqqA peptide cyclase of Granulibacter bethesdensis (strain ATCC BAA-1260 / CGDNIH1).